The following is a 40-amino-acid chain: U2-ctenitoxin-Pr1a (40 aa).

4 cysteine pairs are disulfide-bonded: Cys-2–Cys-17, Cys-9–Cys-22, Cys-16–Cys-32, and Cys-24–Cys-30.

Expressed by the venom gland.

It localises to the secreted. Functionally, neurotoxin. The polypeptide is U2-ctenitoxin-Pr1a (Phoneutria reidyi (Brazilian Amazonian armed spider)).